Consider the following 425-residue polypeptide: UDP-N-acetylglucosamine 1-carboxyvinyltransferase (425 aa).

23–24 (KN) serves as a coordination point for phosphoenolpyruvate. Arg-100 contacts UDP-N-acetyl-alpha-D-glucosamine. The active-site Proton donor is the Cys-124. Residue Cys-124 is modified to 2-(S-cysteinyl)pyruvic acid O-phosphothioketal. UDP-N-acetyl-alpha-D-glucosamine contacts are provided by Asp-313 and Ile-335.

This sequence belongs to the EPSP synthase family. MurA subfamily.

Its subcellular location is the cytoplasm. The catalysed reaction is phosphoenolpyruvate + UDP-N-acetyl-alpha-D-glucosamine = UDP-N-acetyl-3-O-(1-carboxyvinyl)-alpha-D-glucosamine + phosphate. Its pathway is cell wall biogenesis; peptidoglycan biosynthesis. Cell wall formation. Adds enolpyruvyl to UDP-N-acetylglucosamine. In Wolbachia sp. subsp. Drosophila simulans (strain wRi), this protein is UDP-N-acetylglucosamine 1-carboxyvinyltransferase.